The chain runs to 99 residues: Probable non-specific lipid-transfer protein AKCS9 (99 aa).

The N-terminal stretch at methionine 1–threonine 33 is a signal peptide. Disulfide bonds link cysteine 34–cysteine 68, cysteine 42–cysteine 56, cysteine 57–cysteine 92, and cysteine 66–cysteine 99.

It belongs to the plant LTP family. As to expression, expressed in most tissues except nodules.

Functionally, potential lipid transfer protein. The sequence is that of Probable non-specific lipid-transfer protein AKCS9 from Vigna unguiculata (Cowpea).